We begin with the raw amino-acid sequence, 212 residues long: ATP phosphoribosyltransferase (212 aa).

This sequence belongs to the ATP phosphoribosyltransferase family. Short subfamily. In terms of assembly, heteromultimer composed of HisG and HisZ subunits.

The protein resides in the cytoplasm. It catalyses the reaction 1-(5-phospho-beta-D-ribosyl)-ATP + diphosphate = 5-phospho-alpha-D-ribose 1-diphosphate + ATP. Its pathway is amino-acid biosynthesis; L-histidine biosynthesis; L-histidine from 5-phospho-alpha-D-ribose 1-diphosphate: step 1/9. Catalyzes the condensation of ATP and 5-phosphoribose 1-diphosphate to form N'-(5'-phosphoribosyl)-ATP (PR-ATP). Has a crucial role in the pathway because the rate of histidine biosynthesis seems to be controlled primarily by regulation of HisG enzymatic activity. This Prochlorococcus marinus (strain MIT 9515) protein is ATP phosphoribosyltransferase.